The following is a 120-amino-acid chain: Ribosome-binding factor A (120 aa).

The protein belongs to the RbfA family. As to quaternary structure, monomer. Binds 30S ribosomal subunits, but not 50S ribosomal subunits or 70S ribosomes.

Its subcellular location is the cytoplasm. In terms of biological role, one of several proteins that assist in the late maturation steps of the functional core of the 30S ribosomal subunit. Associates with free 30S ribosomal subunits (but not with 30S subunits that are part of 70S ribosomes or polysomes). Required for efficient processing of 16S rRNA. May interact with the 5'-terminal helix region of 16S rRNA. This chain is Ribosome-binding factor A, found in Dictyoglomus thermophilum (strain ATCC 35947 / DSM 3960 / H-6-12).